The primary structure comprises 273 residues: MGILSVDLLITLQILPVFFSNCLFLALYDSVILLKHVVLLLSRSKSTRGEWRRMLTSEGLRCVWKSFLLDAYKQVKLGEDAPNSSVVHVSSTEGGDNSGNGTQEKIAEGATCHLLDFASPERPLVVNFGSATUPPFTSQLPAFRKLVEEFSSVADFLLVYIDEAHPSDGWAIPGDSSLSFEVKKHQNQEDRCAAAQQLLERFSLPPQCRVVADRMDNNANIAYGVAFERVCIVQRQKIAYLGGKGPFSYNLQEVRHWLEKNFSKRUKKTRLAG.

The Lumenal segment spans residues 1–9 (MGILSVDLL). The chain crosses the membrane as a helical; Signal-anchor for type III membrane protein span at residues 10-34 (ITLQILPVFFSNCLFLALYDSVILL). At 35-273 (KHVVLLLSRS…KRUKKTRLAG (239 aa)) the chain is on the cytoplasmic side. Residue selenocysteine 133 is part of the active site. Non-standard amino acids (selenocysteine) are located at selenocysteine 133 and selenocysteine 266.

This sequence belongs to the iodothyronine deiodinase family. Predominantly monomer. Can form homodimers but homodimerization is not essential for enzyme activity. Interacts with USP20 and USP33. Interacts with MARCHF6. In terms of processing, ubiquitinated by MARCHF6, leading to its degradation by the proteasome. Deubiquitinated by USP20 and USP33. In terms of tissue distribution, isoform 1 is expressed in the lung, trachea, kidney, heart, skeletal muscle, placenta, fetal brain and several regions of the adult brain. Isoform 2 is expressed in the brain, heart, kidney and trachea.

Its subcellular location is the endoplasmic reticulum membrane. The enzyme catalyses 3,3',5-triiodo-L-thyronine + iodide + A + H(+) = L-thyroxine + AH2. The catalysed reaction is 3,3'-diiodo-L-thyronine + iodide + A + H(+) = 3,3',5'-triiodo-L-thyronine + AH2. It carries out the reaction 3'-iodo-L-thyronine + iodide + A + H(+) = 3',5'-diiodo-L-thyronine + AH2. It catalyses the reaction 3,3'-diiodothyronamine + iodide + A + H(+) = 3,3',5'-triiodothyronamine + AH2. The enzyme catalyses 3'-iodothyronamine + iodide + A + H(+) = 3',5'-diiodothyronamine + AH2. In terms of biological role, plays a crucial role in the metabolism of thyroid hormones (TH) and has specific roles in TH activation and inactivation by deiodination. Catalyzes the deiodination of L-thyroxine (T4) to 3,5,3'-triiodothyronine (T3), 3,3',5'-triiodothyronine (rT3) to 3,3'-diiodothyronine (3,3'-T2) and 3',5'-diiodothyronine (3',5'-T2) to 3'-monoiodothyronine (3'-T1) via outer-ring deiodination (ORD). Catalyzes the phenolic ring deiodinations of 3,3',5'-triiodothyronamine and 3',5'- diiodothyronamine. The chain is Type II iodothyronine deiodinase (DIO2) from Homo sapiens (Human).